Reading from the N-terminus, the 337-residue chain is Anthranilate phosphoribosyltransferase (337 aa).

5-phospho-alpha-D-ribose 1-diphosphate is bound by residues Gly82, 85–86 (GD), Thr90, 92–95 (NIST), 110–118 (KHGGRSVSS), and Ser122. Gly82 is a binding site for anthranilate. Mg(2+) is bound at residue Ser94. Anthranilate is bound at residue Arg168. 2 residues coordinate Mg(2+): Asp226 and Glu227.

Belongs to the anthranilate phosphoribosyltransferase family. Homodimer. The cofactor is Mg(2+).

The enzyme catalyses N-(5-phospho-beta-D-ribosyl)anthranilate + diphosphate = 5-phospho-alpha-D-ribose 1-diphosphate + anthranilate. The protein operates within amino-acid biosynthesis; L-tryptophan biosynthesis; L-tryptophan from chorismate: step 2/5. In terms of biological role, catalyzes the transfer of the phosphoribosyl group of 5-phosphorylribose-1-pyrophosphate (PRPP) to anthranilate to yield N-(5'-phosphoribosyl)-anthranilate (PRA). This chain is Anthranilate phosphoribosyltransferase, found in Francisella tularensis subsp. tularensis (strain WY96-3418).